Consider the following 457-residue polypeptide: Argininosuccinate lyase (457 aa).

This sequence belongs to the lyase 1 family. Argininosuccinate lyase subfamily.

It is found in the cytoplasm. It carries out the reaction 2-(N(omega)-L-arginino)succinate = fumarate + L-arginine. It participates in amino-acid biosynthesis; L-arginine biosynthesis; L-arginine from L-ornithine and carbamoyl phosphate: step 3/3. The sequence is that of Argininosuccinate lyase from Escherichia coli O1:K1 / APEC.